Here is a 205-residue protein sequence, read N- to C-terminus: Small ribosomal subunit protein uS4 (205 aa).

In terms of domain architecture, S4 RNA-binding spans 94–172 (SRLDSIVYRM…TTPDYVSFDV (79 aa)).

Belongs to the universal ribosomal protein uS4 family. Part of the 30S ribosomal subunit. Contacts protein S5. The interaction surface between S4 and S5 is involved in control of translational fidelity.

Functionally, one of the primary rRNA binding proteins, it binds directly to 16S rRNA where it nucleates assembly of the body of the 30S subunit. In terms of biological role, with S5 and S12 plays an important role in translational accuracy. This chain is Small ribosomal subunit protein uS4, found in Rickettsia bellii (strain OSU 85-389).